The following is a 278-amino-acid chain: Formyltetrahydrofolate deformylase (278 aa).

One can recognise an ACT domain in the interval 6 to 85 (ILLTDCPDDK…RLIGTQRKRI (80 aa)). The active site involves Asp223.

This sequence belongs to the PurU family.

The catalysed reaction is (6R)-10-formyltetrahydrofolate + H2O = (6S)-5,6,7,8-tetrahydrofolate + formate + H(+). It participates in purine metabolism; IMP biosynthesis via de novo pathway; formate from 10-formyl-5,6,7,8-tetrahydrofolate: step 1/1. Functionally, catalyzes the hydrolysis of 10-formyltetrahydrofolate (formyl-FH4) to formate and tetrahydrofolate (FH4). The chain is Formyltetrahydrofolate deformylase from Haemophilus influenzae (strain ATCC 51907 / DSM 11121 / KW20 / Rd).